Consider the following 115-residue polypeptide: Large ribosomal subunit protein uL18 (115 aa).

The segment at 1–24 (MISKPDKNKLRQKRHTRVRGKISG) is disordered. Residues 10–20 (LRQKRHTRVRG) show a composition bias toward basic residues.

It belongs to the universal ribosomal protein uL18 family. As to quaternary structure, part of the 50S ribosomal subunit; part of the 5S rRNA/L5/L18/L25 subcomplex. Contacts the 5S and 23S rRNAs.

Its function is as follows. This is one of the proteins that bind and probably mediate the attachment of the 5S RNA into the large ribosomal subunit, where it forms part of the central protuberance. The protein is Large ribosomal subunit protein uL18 of Lactococcus lactis subsp. cremoris (strain MG1363).